Consider the following 453-residue polypeptide: Divalent metal cation transporter MntH (453 aa).

Helical transmembrane passes span 39–59 (LAFL…GNWI), 66–86 (AQYG…AMLL), 114–134 (AIMF…AEVI), 146–166 (IPLI…LFIM), 175–195 (AIVG…VYIS), 217–237 (GILY…NLYL), 270–290 (LSIA…LFFG), 310–330 (PALG…ALLA), 362–382 (LITR…FKGN), 388–408 (QLLV…LIPL), and 427–447 (INII…YLII).

The protein belongs to the NRAMP family.

It localises to the cell membrane. H(+)-stimulated, divalent metal cation uptake system. The chain is Divalent metal cation transporter MntH from Staphylococcus epidermidis (strain ATCC 12228 / FDA PCI 1200).